Consider the following 232-residue polypeptide: UPF0502 protein Aave_3438 (232 aa).

It belongs to the UPF0502 family.

This Paracidovorax citrulli (strain AAC00-1) (Acidovorax citrulli) protein is UPF0502 protein Aave_3438.